The chain runs to 150 residues: Protein-export protein SecB (150 aa).

It belongs to the SecB family. In terms of assembly, homotetramer, a dimer of dimers. One homotetramer interacts with 1 SecA dimer.

The protein localises to the cytoplasm. Its function is as follows. One of the proteins required for the normal export of preproteins out of the cell cytoplasm. It is a molecular chaperone that binds to a subset of precursor proteins, maintaining them in a translocation-competent state. It also specifically binds to its receptor SecA. In Polaromonas sp. (strain JS666 / ATCC BAA-500), this protein is Protein-export protein SecB.